Reading from the N-terminus, the 761-residue chain is Proton-coupled zinc antiporter SLC30A5 (761 aa).

An N-acetylmethionine modification is found at Met1. At Met1–Arg29 the chain is on the cytoplasmic side. The helical transmembrane segment at Tyr30–Phe46 threads the bilayer. At Glu47–Ala54 the chain is on the lumenal side. Residues Val55–Phe75 form a helical membrane-spanning segment. The Cytoplasmic portion of the chain corresponds to Gln76–His96. A helical transmembrane segment spans residues Ala97–Leu117. Residue Arg118 is a topological domain, lumenal. A helical membrane pass occupies residues Thr119 to Thr139. Residues Ser140–Gly150 are Cytoplasmic-facing. The helical transmembrane segment at Ala151 to Ala171 threads the bilayer. At Lys172–Thr191 the chain is on the lumenal side. The helical transmembrane segment at Ala192–Leu212 threads the bilayer. Residues Cys213–Gln236 are Cytoplasmic-facing. Residues Ala237–Thr257 traverse the membrane as a helical segment. The Lumenal portion of the chain corresponds to Thr258–Ser264. The chain crosses the membrane as a helical span at residues Trp265–Tyr285. The Cytoplasmic segment spans residues Met286–Arg301. A helical transmembrane segment spans residues Tyr302–Ile322. Over Thr323 to His340 the chain is Lumenal. A helical transmembrane segment spans residues Val341–Ser361. Residues Ser362–Gln416 are Cytoplasmic-facing. The chain crosses the membrane as a helical span at residues Ile417–Leu437. Residues Phe418–Leu636 are mediates homodimerization with SLC30A6. Topologically, residues Thr438 to Asp446 are lumenal. Residues Gly447–Ser467 traverse the membrane as a helical segment. Residues His449 and Asp453 each coordinate Zn(2+). At Arg468–Arg481 the chain is on the cytoplasmic side. Residues Ile482–Phe502 form a helical membrane-spanning segment. Topologically, residues Met503–Asn518 are lumenal. Residues Met519 to Ser539 form a helical membrane-spanning segment. The segment at His540–His574 is his-rich loop; required for zinc transport. At His540–Val588 the chain is on the cytoplasmic side. Positions Ser549 to Phe576 are disordered. A helical transmembrane segment spans residues Phe589–Ile609. Zn(2+) contacts are provided by His591 and Asp595. Over Glu610–Gly613 the chain is Lumenal. A helical membrane pass occupies residues Trp614–Ile634. Over Pro635–Met761 the chain is Cytoplasmic.

It belongs to the cation diffusion facilitator (CDF) transporter (TC 2.A.4) family. SLC30A subfamily. As to quaternary structure, heterodimer with SLC30A6/ZNT6; form a functional zinc ion transmembrane transporter. Could homodimerize through the formation of dityrosine bonds upon oxidative stress. As to expression, ubiquitously expressed.

Its subcellular location is the golgi apparatus. The protein localises to the golgi stack membrane. It localises to the cytoplasmic vesicle. It is found in the COPII-coated vesicle membrane. The protein resides in the secretory vesicle membrane. Its subcellular location is the trans-Golgi network membrane. The enzyme catalyses Zn(2+)(in) + 2 H(+)(out) = Zn(2+)(out) + 2 H(+)(in). In terms of biological role, together with SLC30A6 forms a functional proton-coupled zinc ion antiporter mediating zinc entry into the lumen of organelles along the secretory pathway. By contributing to zinc ion homeostasis within the early secretory pathway, regulates the activation and folding of enzymes like alkaline phosphatases and enzymes involved in phosphatidylinositol glycan anchor biosynthesis. Through the transport of zinc into secretory granules of pancreatic beta-cells, plays an important role in the storage and secretion of insulin. This chain is Proton-coupled zinc antiporter SLC30A5, found in Mus musculus (Mouse).